Reading from the N-terminus, the 136-residue chain is MGKIMKPGKVVLVLRGKYAGRKAVVVKQQDEGVSDRTYPHAIIAGIDRYPLKVTKDMGKKKIEKRNKLKPFLKVVSYTHLLPTRYSVDVAFDKTNINKEALKAPSKKRKALVEVKSKFEERYKTGKNKWFFTKLRF.

One can recognise a KOW domain in the interval 5–36 (MKPGKVVLVLRGKYAGRKAVVVKQQDEGVSDR).

It belongs to the eukaryotic ribosomal protein eL27 family. In terms of assembly, component of the large ribosomal subunit.

The protein resides in the cytoplasm. Its subcellular location is the cytosol. It localises to the rough endoplasmic reticulum. In terms of biological role, component of the large ribosomal subunit. In Caenorhabditis elegans, this protein is Large ribosomal subunit protein eL27 (rpl-27).